Here is a 589-residue protein sequence, read N- to C-terminus: Formate--tetrahydrofolate ligase (589 aa).

74-81 contacts ATP; that stretch reads TPFGEGKS.

It belongs to the formate--tetrahydrofolate ligase family.

It carries out the reaction (6S)-5,6,7,8-tetrahydrofolate + formate + ATP = (6R)-10-formyltetrahydrofolate + ADP + phosphate. The protein operates within one-carbon metabolism; tetrahydrofolate interconversion. The sequence is that of Formate--tetrahydrofolate ligase from Thermodesulfovibrio yellowstonii (strain ATCC 51303 / DSM 11347 / YP87).